We begin with the raw amino-acid sequence, 23 residues long: Dahlein-4.1 (23 aa).

Expressed by the skin dorsal glands.

The protein resides in the secreted. In terms of biological role, has no antimicrobial activity. The polypeptide is Dahlein-4.1 (Ranoidea dahlii (Dahl's aquatic frog)).